The chain runs to 970 residues: Cullin-4B (970 aa).

Positions methionine 1–aspartate 14 are enriched in basic and acidic residues. Disordered regions lie at residues methionine 1–leucine 157 and alanine 189–glutamine 211. Phosphothreonine is present on threonine 15. Serine 17 carries the post-translational modification Phosphoserine. Over residues proline 36–glutamine 57 the composition is skewed to pro residues. Low complexity predominate over residues serine 78–alanine 98. Over residues threonine 99–threonine 109 the composition is skewed to polar residues. A Phosphothreonine modification is found at threonine 106. Serine 110 carries the phosphoserine modification. The short motif at lysine 112–lysine 115 is the Nuclear localization signal element. A compositionally biased stretch (low complexity) spans asparagine 117–serine 126. A compositionally biased stretch (polar residues) spans aspartate 146–phenylalanine 155. Phosphoserine is present on residues serine 154 and serine 200. Residues serine 192–glutamine 211 are compositionally biased toward low complexity. A Phosphothreonine modification is found at threonine 202. Lysine 247 is covalently cross-linked (Glycyl lysine isopeptide (Lys-Gly) (interchain with G-Cter in ubiquitin)). Serine 250 is modified (phosphoserine). In terms of domain architecture, Cullin neddylation spans aspartate 902–asparagine 962. Residue lysine 916 forms a Glycyl lysine isopeptide (Lys-Gly) (interchain with G-Cter in NEDD8) linkage.

It belongs to the cullin family. As to quaternary structure, component of multiple DCX (DDB1-CUL4-X-box) E3 ubiquitin-protein ligase complexes that seem to be formed of DDB1, CUL4A or CUL4B, RBX1 and a variable substrate recognition component which seems to belong to a protein family described as DCAF (Ddb1- and Cul4-associated factor) or CDW (CUL4-DDB1-associated WD40-repeat) proteins. Component of the DCX(DTL) complex with the putative substrate recognition component DTL. Component of the DCX(DDB2) complex with the putative substrate recognition component DDB2. Component of DCX complexes part of the DesCEND (destruction via C-end degrons) pathway, which contain either TRPC4AP or DCAF12 as substrate-recognition component. Component of the DCX(AMBRA1) complex with the substrate recognition component AMBRA1. Part of a complex with RBX1 and TIP120A/CAND1. Component of the DCX(WDR77) complex, composed of Cul4b, Ddb1, Wdr77 and Rbx1. Interacts with RBX1, GRWD1, MLST8, SMU1, TLE2, TLE3, DCAF1, DDA1, DCAF6, DCAF17, DDB2, DCAF8, TIP120A/CAND1 and TMEM113. Interacts with cyclin E (CCNE1 or CCNE2) and with importins alpha-1 (KPNA2), alpha-3 (KPNA4), alpha-5 (KPNA1) and beta-1 (KPNB1). May interact with WDR26, WDR51B, SNRNP40, WDR61, WDR76 and WDR5. Interacts (unneddylated form) with DCUN1D1, DCUN1D2, DCUN1D3, DCUN1D4 and DCUN1D5; these interactions promote the cullin neddylation. Neddylated. Deneddylated via its interaction with the COP9 signalosome (CSN) complex. Expressed in oocytes (at protein level).

The protein resides in the cytoplasm. The protein localises to the nucleus. It participates in protein modification; protein ubiquitination. Its function is as follows. Core component of multiple cullin-RING-based E3 ubiquitin-protein ligase complexes which mediate the ubiquitination and subsequent proteasomal degradation of target proteins. The functional specificity of the E3 ubiquitin-protein ligase complex depends on the variable substrate recognition subunit. CUL4B may act within the complex as a scaffold protein, contributing to catalysis through positioning of the substrate and the ubiquitin-conjugating enzyme. Plays a role as part of the E3 ubiquitin-protein ligase complex in polyubiquitination of CDT1, histone H2A, histone H3 and histone H4 in response to radiation-induced DNA damage. Targeted to UV damaged chromatin by DDB2 and may be important for DNA repair and DNA replication. A number of DCX complexes (containing either TRPC4AP or DCAF12 as substrate-recognition component) are part of the DesCEND (destruction via C-end degrons) pathway, which recognizes a C-degron located at the extreme C terminus of target proteins, leading to their ubiquitination and degradation. The DCX(AMBRA1) complex is a master regulator of the transition from G1 to S cell phase by mediating ubiquitination of phosphorylated cyclin-D (CCND1, CCND2 and CCND3). The DCX(AMBRA1) complex also acts as a regulator of Cul5-RING (CRL5) E3 ubiquitin-protein ligase complexes by mediating ubiquitination and degradation of Elongin-C (ELOC) component of CRL5 complexes. Required for ubiquitination of cyclin E (CCNE1 or CCNE2), and consequently, normal G1 cell cycle progression. Component of the DCX(WDR77) complex, which mediates ubiquitination and degradation of Irgm1 in intestinal cells. Regulates the mammalian target-of-rapamycin (mTOR) pathway involved in control of cell growth, size and metabolism. Specific CUL4B regulation of the mTORC1-mediated pathway is dependent upon 26S proteasome function and requires interaction between CUL4B and MLST8. With CUL4A, contributes to ribosome biogenesis. The polypeptide is Cullin-4B (Mus musculus (Mouse)).